The chain runs to 921 residues: Guanylate kinase-associated protein mars (921 aa).

S49 bears the Phosphoserine mark. T51 is modified (phosphothreonine). Residues S76 and S170 each carry the phosphoserine modification. Residue Y172 is modified to Phosphotyrosine. 2 disordered regions span residues 179–208 (GKGK…TVAA) and 273–325 (RPTP…PLGN). Composition is skewed to low complexity over residues 193-208 (KPTS…TVAA) and 273-285 (RPTP…AKTP). Phosphoserine is present on S444. Residues 500 to 531 (QTTVKEDTGDSTLVPEGTKTPPRRESNGMPNY) form a disordered region. T519 is modified (phosphothreonine). S554 bears the Phosphoserine mark. Disordered regions lie at residues 641 to 660 (AGAT…SKPV) and 743 to 763 (TKVE…RHSS). S785 and S792 each carry phosphoserine. 2 disordered regions span residues 809-833 (QNAA…TKRQ) and 861-921 (ETVG…SEFM). The residue at position 826 (T826) is a Phosphothreonine. Residues 878-907 (EASTESGSLEQNPGRDSNQENEATPRTYTL) show a composition bias toward polar residues.

This sequence belongs to the SAPAP family. As to expression, expressed in the central nervous system and at different stages of gametogenesis. In embryos, it is expressed in central nervous system and brain. In testis, it is strongly expressed in pre-meiotic germ cells, but is not found in somatic or post-meiotic cells.

It localises to the cell membrane. The protein resides in the nucleus. It is found in the nucleoplasm. Its subcellular location is the cytoplasm. The protein localises to the cytoskeleton. It localises to the spindle. Its function is as follows. Cell cycle regulator. This chain is Guanylate kinase-associated protein mars (mars), found in Drosophila melanogaster (Fruit fly).